Consider the following 481-residue polypeptide: MALKALDYDTLNENVKKCQYAVRGELYLRASELQKEGKKIIFTNVGNPHALGQKPLTFPRQVVALCQAPFLLDDPNVGMLFPADAIARAKHYLSLTSGGLGAYSDSRGLPGVRKEVAEFIQRRDGYPSDPELIFLTDGASKGVMQILNCVIRGNGDGILVPVPQYPLYSATISLLGGTLVPYYLDESENWGLDVANLRQSVAQARSQGITVRAMVIINPGNPTGQCLSEANIREILKFCYNEKLVLLGDEVYQQNIYQDERPFISSKKVLMEMGSPFSKEVQLVSFHTVSKGYWGECGQRGGYFEMTNLPPRVVEEIYKVASIALSPNVSAQIFMGLMVNPPKPGDISYDQFARESKGILESLRRRARLMTDGFNSCKNVVCNFTEGAMYSFPQIRLPTGALQAAKQAGKVPDVFYCLKLLEATGISTVPGSGFGQKEGVFHLRTTILPAEDEMPEIMDSFKKFNDEFMTQYDNNFGYSKM.

K291 carries the N6-(pyridoxal phosphate)lysine modification. The Peroxisomal targeting signal signature appears at 479–481; that stretch reads SKM.

This sequence belongs to the class-I pyridoxal-phosphate-dependent aminotransferase family. Alanine aminotransferase subfamily. In terms of assembly, homodimer. Pyridoxal 5'-phosphate serves as cofactor. The N-terminus is blocked. As to expression, mostly expressed in leaves, and, to a lower extent, in shoots, stems, flowers, seedlings and green siliques.

Its subcellular location is the peroxisome. It catalyses the reaction L-alanine + 2-oxoglutarate = pyruvate + L-glutamate. It carries out the reaction glyoxylate + L-alanine = glycine + pyruvate. The catalysed reaction is glycine + 2-oxoglutarate = glyoxylate + L-glutamate. It functions in the pathway amino-acid biosynthesis; glycine biosynthesis; glycine from glyoxylate: step 1/1. Its pathway is photosynthesis; C4 acid pathway. The protein operates within amino-acid degradation; L-alanine degradation via transaminase pathway; pyruvate from L-alanine: step 1/1. In terms of biological role, catalyzes the glutamate:glyoxylate (GGT or GGAT), alanine:glyoxylate (AGT), alanine:2-oxoglutarate (AKT) and glutamate:pyruvate (GPT) aminotransferase reactions in peroxisomes. Required for abscisic acid (ABA)- and stress-mediated responses in an H(2)O(2)-dependent manner. Functions as a photorespiratory aminotransferase that modulates amino acid content during photorespiration (GGAT activity); promotes serine, glycine and citrulline metabolism in response to light. The chain is Glutamate--glyoxylate aminotransferase 1 (GGAT1) from Arabidopsis thaliana (Mouse-ear cress).